Here is a 1412-residue protein sequence, read N- to C-terminus: DNA-directed RNA polymerase subunit beta' (1412 aa).

4 residues coordinate Zn(2+): C70, C72, C85, and C88. Mg(2+)-binding residues include D458, D460, and D462. Residues C813, C887, C894, and C897 each contribute to the Zn(2+) site. Residues 1388–1412 (EQALLTPATTAEAVVGEEPAPPPAQ) are disordered. Over residues 1393–1405 (TPATTAEAVVGEE) the composition is skewed to low complexity.

The protein belongs to the RNA polymerase beta' chain family. The RNAP catalytic core consists of 2 alpha, 1 beta, 1 beta' and 1 omega subunit. When a sigma factor is associated with the core the holoenzyme is formed, which can initiate transcription. It depends on Mg(2+) as a cofactor. Requires Zn(2+) as cofactor.

The catalysed reaction is RNA(n) + a ribonucleoside 5'-triphosphate = RNA(n+1) + diphosphate. Functionally, DNA-dependent RNA polymerase catalyzes the transcription of DNA into RNA using the four ribonucleoside triphosphates as substrates. The protein is DNA-directed RNA polymerase subunit beta' of Methylibium petroleiphilum (strain ATCC BAA-1232 / LMG 22953 / PM1).